A 381-amino-acid chain; its full sequence is Ecotin-like protein 3 (381 aa).

The tract at residues 232 to 381 is disordered; sequence EHLEVCPKNN…GSKADPVDGK (150 aa). Residues 273-292 are compositionally biased toward polar residues; the sequence is NESSPSRPRLSSTAYWPQEN. Over residues 336–347 the composition is skewed to basic and acidic residues; sequence RKAEDDVYEKTM. Residues 363 to 372 show a composition bias toward polar residues; that stretch reads SASSTKSGNG.

The protein belongs to the protease inhibitor I11 (ecotin) family.

The chain is Ecotin-like protein 3 from Leishmania major.